Consider the following 342-residue polypeptide: Ferredoxin--NADP reductase (342 aa).

The FAD site is built by cysteine 17, aspartate 36, glutamine 44, tyrosine 49, isoleucine 89, phenylalanine 124, aspartate 289, and threonine 330.

Belongs to the ferredoxin--NADP reductase type 2 family. Homodimer. Requires FAD as cofactor.

The catalysed reaction is 2 reduced [2Fe-2S]-[ferredoxin] + NADP(+) + H(+) = 2 oxidized [2Fe-2S]-[ferredoxin] + NADPH. This is Ferredoxin--NADP reductase from Rhodopseudomonas palustris (strain HaA2).